A 335-amino-acid chain; its full sequence is Mevalonate kinase (335 aa).

Pro111–Ala121 is an ATP binding site. Catalysis depends on Asp162, which acts as the Proton acceptor.

The protein belongs to the GHMP kinase family. Mevalonate kinase subfamily. As to quaternary structure, homodimer. Mg(2+) is required as a cofactor.

Its subcellular location is the cytoplasm. The enzyme catalyses (R)-mevalonate + ATP = (R)-5-phosphomevalonate + ADP + H(+). Its pathway is isoprenoid biosynthesis; isopentenyl diphosphate biosynthesis via mevalonate pathway; isopentenyl diphosphate from (R)-mevalonate: step 1/3. In terms of biological role, catalyzes the phosphorylation of (R)-mevalonate (MVA) to (R)-mevalonate 5-phosphate (MVAP). Functions in the mevalonate (MVA) pathway leading to isopentenyl diphosphate (IPP), a key precursor for the biosynthesis of isoprenoid compounds such as archaeal membrane lipids. This chain is Mevalonate kinase, found in Pyrococcus horikoshii (strain ATCC 700860 / DSM 12428 / JCM 9974 / NBRC 100139 / OT-3).